The chain runs to 1008 residues: Kinesin-like protein KIN-5C (1008 aa).

The region spanning 12 to 359 (NVQVLLRCRP…LDYAHRAKSI (348 aa)) is the Kinesin motor domain. 98–105 (GQTGTGKT) is an ATP binding site. Positions 402–459 (KDRYQQEENERKAMADQIEQMTTSLEANQKQINDLQEKYDSELQHSADLSKKLEATEK) form a coiled coil. Disordered stretches follow at residues 910–931 (VEAH…TAGI), 943–962 (YKDY…EVPS), and 975–1008 (ESLM…TINN). Positions 913-925 (HLGESQHLQESHS) are enriched in basic and acidic residues. The segment covering 979–995 (DEFRENHPYEPSKDRRP) has biased composition (basic and acidic residues).

Belongs to the TRAFAC class myosin-kinesin ATPase superfamily. Kinesin family. KIN-5/BimC subfamily.

Its subcellular location is the cytoplasm. It is found in the cytoskeleton. The protein resides in the spindle. In terms of biological role, responsible for microtubule translocation. May be important for the organization of phragmoplast-specific arrays of microtubules. Plays an essential role in stabilizing the mitotic spindle. Required during mitotic cytokinesis. The polypeptide is Kinesin-like protein KIN-5C (Oryza sativa subsp. japonica (Rice)).